The following is a 346-amino-acid chain: DNA-directed RNA polymerase subunit alpha (346 aa).

The alpha N-terminal domain (alpha-NTD) stretch occupies residues 1–233 (MLRDEVAVSA…DLFIPFLHAE (233 aa)). Positions 268–346 (IELKCIFIDQ…NKFLIGNPSE (79 aa)) are alpha C-terminal domain (alpha-CTD).

This sequence belongs to the RNA polymerase alpha chain family. In plastids the minimal PEP RNA polymerase catalytic core is composed of four subunits: alpha, beta, beta', and beta''. When a (nuclear-encoded) sigma factor is associated with the core the holoenzyme is formed, which can initiate transcription.

It is found in the plastid. Its subcellular location is the chloroplast. It carries out the reaction RNA(n) + a ribonucleoside 5'-triphosphate = RNA(n+1) + diphosphate. Its function is as follows. DNA-dependent RNA polymerase catalyzes the transcription of DNA into RNA using the four ribonucleoside triphosphates as substrates. In Ranunculus macranthus (Large buttercup), this protein is DNA-directed RNA polymerase subunit alpha.